The primary structure comprises 134 residues: Large ribosomal subunit protein uL16c (134 aa).

A compositionally biased stretch (basic residues) spans 1 to 17; it reads MLSPKRTRFRKQHRGRM. A disordered region spans residues 1–21; sequence MLSPKRTRFRKQHRGRMKGIS.

The protein belongs to the universal ribosomal protein uL16 family. In terms of assembly, part of the 50S ribosomal subunit.

The protein resides in the plastid. Its subcellular location is the chloroplast. The protein is Large ribosomal subunit protein uL16c of Solanum bulbocastanum (Wild potato).